The primary structure comprises 287 residues: Bifunctional protein FolD (287 aa).

NADP(+) contacts are provided by residues 165–167, threonine 190, and isoleucine 231; that span reads GRG.

It belongs to the tetrahydrofolate dehydrogenase/cyclohydrolase family. As to quaternary structure, homodimer.

The enzyme catalyses (6R)-5,10-methylene-5,6,7,8-tetrahydrofolate + NADP(+) = (6R)-5,10-methenyltetrahydrofolate + NADPH. The catalysed reaction is (6R)-5,10-methenyltetrahydrofolate + H2O = (6R)-10-formyltetrahydrofolate + H(+). Its pathway is one-carbon metabolism; tetrahydrofolate interconversion. Catalyzes the oxidation of 5,10-methylenetetrahydrofolate to 5,10-methenyltetrahydrofolate and then the hydrolysis of 5,10-methenyltetrahydrofolate to 10-formyltetrahydrofolate. This chain is Bifunctional protein FolD, found in Heliobacterium modesticaldum (strain ATCC 51547 / Ice1).